We begin with the raw amino-acid sequence, 151 residues long: Deoxyuridine 5'-triphosphate nucleotidohydrolase (151 aa).

Residues 70–72, N83, and 87–89 each bind substrate; these read RSG and LID.

The protein belongs to the dUTPase family. It depends on Mg(2+) as a cofactor.

It carries out the reaction dUTP + H2O = dUMP + diphosphate + H(+). It participates in pyrimidine metabolism; dUMP biosynthesis; dUMP from dCTP (dUTP route): step 2/2. In terms of biological role, this enzyme is involved in nucleotide metabolism: it produces dUMP, the immediate precursor of thymidine nucleotides and it decreases the intracellular concentration of dUTP so that uracil cannot be incorporated into DNA. This is Deoxyuridine 5'-triphosphate nucleotidohydrolase from Methylococcus capsulatus (strain ATCC 33009 / NCIMB 11132 / Bath).